The primary structure comprises 244 residues: Protein DCG1 (244 aa).

This sequence belongs to the HyuE racemase family.

This chain is Protein DCG1 (DCG1), found in Saccharomyces cerevisiae (strain ATCC 204508 / S288c) (Baker's yeast).